Consider the following 207-residue polypeptide: 8-oxoguanine DNA glycosylase/AP lyase (207 aa).

Active-site residues include K129 and D147.

Belongs to the type-2 OGG1 family.

It catalyses the reaction 2'-deoxyribonucleotide-(2'-deoxyribose 5'-phosphate)-2'-deoxyribonucleotide-DNA = a 3'-end 2'-deoxyribonucleotide-(2,3-dehydro-2,3-deoxyribose 5'-phosphate)-DNA + a 5'-end 5'-phospho-2'-deoxyribonucleoside-DNA + H(+). Its function is as follows. Catalyzes the excision of an oxidatively damaged form of guanine (7,8-dihydro-8-oxoguanine = 8-oxoG) from DNA. Also cleaves the DNA backbone at apurinic/apyrimidinic sites (AP sites). Has little specificity for the base opposite oxoG. This chain is 8-oxoguanine DNA glycosylase/AP lyase, found in Methanocaldococcus jannaschii (strain ATCC 43067 / DSM 2661 / JAL-1 / JCM 10045 / NBRC 100440) (Methanococcus jannaschii).